The following is a 524-amino-acid chain: Cytochrome P450 monooxygenase ATR4 (524 aa).

A helical membrane pass occupies residues 13-36 (IITYLDSLTWVGMALPLFSLCWAI). N-linked (GlcNAc...) asparagine glycans are attached at residues Asn-291, Asn-444, and Asn-454.

It belongs to the cytochrome P450 family. Requires heme as cofactor.

Its subcellular location is the membrane. Its pathway is mycotoxin biosynthesis. Its function is as follows. Cytochrome P450 monooxygenase; part of the core atranone cluster (CAC) which products are predicted to catalyze most or all steps of mycotoxin atranone synthesis, starting from geranylgeranyl pyrophosphate (GGPP). The initial cyclization of GGPP to dolabellane is probably performed by the terpene cyclase ATR13. The Baeyer-Villiger oxidation near the end of the atranone synthesis, which converts atranones D and E to atranones F and G is predicted to be catalyzed by the monooxygenase ATR8. Of the CAC's other predicted gene products, the reducing PKS ATR6 might synthesize a polyketide chain. This polyketide is probably transferred onto the atranone backbone by the polyketide transferase ATR5. Other predicted CAC products include 4 oxygenases (ATR2, ATR3, ATR4, and ATR14), 3 short-chain reductases (ATR7, ATR9, and ATR10), and a methyltransferase (ATR12). These may all be involved in the various steps of atranone biosynthesis, although their specific roles must await experimental determination. The chain is Cytochrome P450 monooxygenase ATR4 from Stachybotrys chlorohalonatus (strain IBT 40285).